The chain runs to 450 residues: MARRYFGTDGIRGQSNVFPMTPDLAMRVGIAVGTIFRRGHHRHRVVIGKDTRLSGYMLENALVAGFTAAGLDVFLLGPIPTPAVAMLTRSLRADIGVMISASHNPFSDNGIKLFGPDGYKLSDELELEIEDLLDKDIYAQLAKPAEIGRAKRVDGDIYRYIEFVKRTLPRDVTLSGLRIAIDCANGAAYKVAPAALWELGAEVVTIGNEPNGININLECGSTHPEALQKKLHEVRADIGIALDGDADRVIIVDERGEIVDGDQLMAVIADSWAADNTLRGGGIVATVMSNLGLERFLGDKGLTLARTKVGDRYVVEHMRNHNFNVGGEQSGHIVLSDYGTTGDGLVAALQVLAKVKRSGLTVSEVCRKFEPVPQLLKNVRISGGKPLENPIVLQAIADAESALANNGRLVIRPSGTEPLIRVMAEGDDSAKVEKIVNDLVGVISSARSAA.

Serine 102 acts as the Phosphoserine intermediate in catalysis. Residues serine 102, aspartate 243, aspartate 245, and aspartate 247 each contribute to the Mg(2+) site. Serine 102 is modified (phosphoserine).

It belongs to the phosphohexose mutase family. Mg(2+) serves as cofactor. Post-translationally, activated by phosphorylation.

It carries out the reaction alpha-D-glucosamine 1-phosphate = D-glucosamine 6-phosphate. In terms of biological role, catalyzes the conversion of glucosamine-6-phosphate to glucosamine-1-phosphate. This is Phosphoglucosamine mutase from Agrobacterium fabrum (strain C58 / ATCC 33970) (Agrobacterium tumefaciens (strain C58)).